We begin with the raw amino-acid sequence, 227 residues long: Nodulation protein W (227 aa).

The Response regulatory domain occupies 21–135; that stretch reads IVFVVEDDIS…ELLDAVVAAT (115 aa). 4-aspartylphosphate is present on Asp70. One can recognise an HTH luxR-type domain in the interval 151-216; it reads LKSLFETLSP…DLIRMSETLG (66 aa). Residues 175 to 194 constitute a DNA-binding region (H-T-H motif); that stretch reads NKQVAAELGLAEITVKIYRG.

In terms of processing, phosphorylated by NodV.

It is found in the cytoplasm. In terms of biological role, member of the two-component regulatory system NodV/NodW probably involved in the regulation of the transcription of genes involved in the nodulation process. This chain is Nodulation protein W (nodW), found in Bradyrhizobium diazoefficiens (strain JCM 10833 / BCRC 13528 / IAM 13628 / NBRC 14792 / USDA 110).